We begin with the raw amino-acid sequence, 118 residues long: Holo-[acyl-carrier-protein] synthase (118 aa).

Mg(2+) contacts are provided by D8 and E58.

It belongs to the P-Pant transferase superfamily. AcpS family. Requires Mg(2+) as cofactor.

The protein localises to the cytoplasm. The catalysed reaction is apo-[ACP] + CoA = holo-[ACP] + adenosine 3',5'-bisphosphate + H(+). Functionally, transfers the 4'-phosphopantetheine moiety from coenzyme A to a Ser of acyl-carrier-protein. The protein is Holo-[acyl-carrier-protein] synthase of Listeria monocytogenes serotype 4a (strain HCC23).